The primary structure comprises 366 residues: Zinc finger protein ubi-d4 B (366 aa).

Disordered stretches follow at residues 41-94 and 140-167; these read ASAP…DGSS and DDLD…IGGA. Basic and acidic residues predominate over residues 76 to 86; the sequence is PDPEQMLKKEG. Acidic residues predominate over residues 140–149; it reads DDLDDEDYEE. The segment at 183-206 adopts a C2H2-type zinc-finger fold; the sequence is YACDICGKRYKNRPGLSYHYAHSH. Residues 211–243 form a disordered region; that stretch reads EGAGAEDKEDSQPPTPIMHRSEEQKSKKGPDGL. Over residues 229–240 the composition is skewed to basic and acidic residues; the sequence is HRSEEQKSKKGP. 2 PHD-type zinc fingers span residues 247–307 and 304–354; these read NNYC…CKCC and CKCC…CLDL.

Belongs to the requiem/DPF family.

It is found in the cytoplasm. The protein localises to the nucleus. May be a transcription factor required for the apoptosis response following survival factor withdrawal from myeloid cells. Might also have a role in the development and maturation of lymphoid cells. This is Zinc finger protein ubi-d4 B (req-b) from Xenopus laevis (African clawed frog).